We begin with the raw amino-acid sequence, 663 residues long: Putative glucosamine-6-phosphate deaminase-like protein BT_0258 (663 aa).

Residues 1-290 are glucosamine-6-phosphate deaminase-like; the sequence is MKTNLSSQIT…NLTRIQRPWL (290 aa). Residue glutamate 184 is part of the active site.

This sequence in the N-terminal section; belongs to the glucosamine/galactosamine-6-phosphate isomerase family. NagB subfamily.

The polypeptide is Putative glucosamine-6-phosphate deaminase-like protein BT_0258 (Bacteroides thetaiotaomicron (strain ATCC 29148 / DSM 2079 / JCM 5827 / CCUG 10774 / NCTC 10582 / VPI-5482 / E50)).